The chain runs to 310 residues: MRSITALFFLFCFLAPSALAQLRTGFYSRSCPRAESIVASVVANRFRSDKSITAAFLRMQFHDCFVRGCDASLLIDPRPGRPSEKSTGPNASVRGYEIIDEAKRQLEAACPRTVSCADIVTLATRDSVALAGGPRFSVPTGRRDGLRSNPNDVNLPGPTIPVSASIQLFAAQGMNTNDMVTLIGGGHSVGVAHCSLFQDRLSDRAMEPSLKSSLRRKCSSPNDPTTFLDQKTSFTVDNAIYGEIRRQRGILRIDQNLGLDRSTSGIVSGYASSNTLFRKRFAEALVKMGTIKVLTGRSGEIRRNCRVFNN.

The signal sequence occupies residues 1–20 (MRSITALFFLFCFLAPSALA). 4 cysteine pairs are disulfide-bonded: C31/C110, C64/C69, C116/C305, and C194/C218. The active-site Proton acceptor is the H62. Ca(2+) is bound by residues D63, V66, G68, D70, and S72. Position 156 (P156) interacts with substrate. H187 serves as a coordination point for heme b. Residue S188 coordinates Ca(2+). Residues D229, T232, and D237 each contribute to the Ca(2+) site.

It belongs to the peroxidase family. Classical plant (class III) peroxidase subfamily. It depends on heme b as a cofactor. Ca(2+) is required as a cofactor.

The protein localises to the secreted. The catalysed reaction is 2 a phenolic donor + H2O2 = 2 a phenolic radical donor + 2 H2O. Its function is as follows. Removal of H(2)O(2), oxidation of toxic reductants, biosynthesis and degradation of lignin, suberization, auxin catabolism, response to environmental stresses such as wounding, pathogen attack and oxidative stress. These functions might be dependent on each isozyme/isoform in each plant tissue. This chain is Peroxidase 44 (PER44), found in Arabidopsis thaliana (Mouse-ear cress).